The chain runs to 295 residues: MTSTINRPLDGEGSVQVKQDPKINIEEGALVIAVYGKGGIGKSTTSSNLSAAFSKLGKKVLQIGCDPKHDSTFTLTHKMVPTVIDILEEVDFHSEELRPTDFMFEGFNGVMCVESGGPPAGTGCGGYVTGQTVKLLKEHHLLEDTDVVIFDVLGDVVCGGFAAPLQHANYCLIVTANDFDSIFAMNRIVSAIKAKAKNYKVRLGGVVANRSKDTDQIDKFNERTGLKTMAHFKDVDAIRRSRLKKCTIFEMEPTEDVIEVQNEYLSLAKNMLEKVEPLEGNPLKDREIFDLLGFD.

Residues 39 to 44 and K68 contribute to the ATP site; that span reads GIGKST. Mg(2+) is bound at residue S43. [4Fe-4S] cluster-binding residues include C124 and C158. 209–210 is an ATP binding site; that stretch reads NR.

It belongs to the NifH/BchL/ChlL family. Homodimer. Protochlorophyllide reductase is composed of three subunits; ChlL, ChlN and ChlB. [4Fe-4S] cluster is required as a cofactor.

It carries out the reaction chlorophyllide a + oxidized 2[4Fe-4S]-[ferredoxin] + 2 ADP + 2 phosphate = protochlorophyllide a + reduced 2[4Fe-4S]-[ferredoxin] + 2 ATP + 2 H2O. The protein operates within porphyrin-containing compound metabolism; chlorophyll biosynthesis (light-independent). Its function is as follows. Component of the dark-operative protochlorophyllide reductase (DPOR) that uses Mg-ATP and reduced ferredoxin to reduce ring D of protochlorophyllide (Pchlide) to form chlorophyllide a (Chlide). This reaction is light-independent. The L component serves as a unique electron donor to the NB-component of the complex, and binds Mg-ATP. The chain is Light-independent protochlorophyllide reductase iron-sulfur ATP-binding protein from Prochlorococcus marinus (strain MIT 9301).